The primary structure comprises 232 residues: Orotidine 5'-phosphate decarboxylase (232 aa).

Substrate-binding positions include aspartate 13, lysine 35, 62-71 (DLKFHDIPNT), threonine 121, arginine 182, glutamine 191, glycine 211, and arginine 212. The Proton donor role is filled by lysine 64.

Belongs to the OMP decarboxylase family. Type 1 subfamily. Homodimer.

The catalysed reaction is orotidine 5'-phosphate + H(+) = UMP + CO2. It participates in pyrimidine metabolism; UMP biosynthesis via de novo pathway; UMP from orotate: step 2/2. Functionally, catalyzes the decarboxylation of orotidine 5'-monophosphate (OMP) to uridine 5'-monophosphate (UMP). The chain is Orotidine 5'-phosphate decarboxylase from Teredinibacter turnerae (strain ATCC 39867 / T7901).